Consider the following 252-residue polypeptide: 5'-nucleotidase SurE (252 aa).

A divalent metal cation contacts are provided by D8, D9, S39, and N91.

It belongs to the SurE nucleotidase family. It depends on a divalent metal cation as a cofactor.

It is found in the cytoplasm. The enzyme catalyses a ribonucleoside 5'-phosphate + H2O = a ribonucleoside + phosphate. Nucleotidase that shows phosphatase activity on nucleoside 5'-monophosphates. This Bordetella avium (strain 197N) protein is 5'-nucleotidase SurE.